Reading from the N-terminus, the 572-residue chain is Hemagglutinin-neuraminidase (572 aa).

The Intravirion segment spans residues 1–31 (MEYWKHTNHRKDAGNELETSMATHGNKLTNK). Residues 32–52 (ITYILWTIILVLLSIVLIIVL) traverse the membrane as a helical segment. Residues 53 to 572 (INSIKSEKAH…FKTEVPKSCS (520 aa)) lie on the Virion surface side of the membrane. 2 disulfide bridges follow: cysteine 190-cysteine 214 and cysteine 256-cysteine 269. Positions 252–257 (NRKSCS) are involved in neuraminidase activity. Residues asparagine 308 and asparagine 351 are each glycosylated (N-linked (GlcNAc...) asparagine; by host). Intrachain disulfides connect cysteine 355/cysteine 469 and cysteine 463/cysteine 473. Asparagine 523 carries an N-linked (GlcNAc...) asparagine; by host glycan. Cysteine 535 and cysteine 544 are disulfide-bonded.

The protein belongs to the paramyxoviruses hemagglutinin-neuraminidase family. In terms of assembly, homotetramer; composed of disulfide-linked homodimers. Interacts with F protein trimer.

The protein localises to the virion membrane. It is found in the host cell membrane. The catalysed reaction is Hydrolysis of alpha-(2-&gt;3)-, alpha-(2-&gt;6)-, alpha-(2-&gt;8)- glycosidic linkages of terminal sialic acid residues in oligosaccharides, glycoproteins, glycolipids, colominic acid and synthetic substrates.. Attaches the virus to sialic acid-containing cell receptors and thereby initiating infection. Binding of HN protein to the receptor induces a conformational change that allows the F protein to trigger virion/cell membranes fusion. In terms of biological role, neuraminidase activity ensures the efficient spread of the virus by dissociating the mature virions from the neuraminic acid containing glycoproteins. In Human parainfluenza 3 virus (strain Tex/9305/82) (HPIV-3), this protein is Hemagglutinin-neuraminidase (HN).